A 182-amino-acid chain; its full sequence is uncharacterized protein (182 aa).

Residues Leu-17–Ala-34 form a helical membrane-spanning segment. 2 TPR repeats span residues Val-89–Asn-122 and Leu-123–Asn-156.

It localises to the membrane. This is an uncharacterized protein from Sinorhizobium fredii (strain NBRC 101917 / NGR234).